A 157-amino-acid polypeptide reads, in one-letter code: Epithelial membrane protein 1 (157 aa).

A helical membrane pass occupies residues methionine 1–valine 21. Asparagine 43 and asparagine 46 each carry an N-linked (GlcNAc...) asparagine glycan. 3 consecutive transmembrane segments (helical) span residues phenylalanine 67–phenylalanine 87, phenylalanine 95–isoleucine 115, and tyrosine 134–leucine 154.

The protein belongs to the PMP-22/EMP/MP20 family.

It is found in the membrane. The sequence is that of Epithelial membrane protein 1 (EMP1) from Homo sapiens (Human).